A 288-amino-acid polypeptide reads, in one-letter code: Probable sulfate transport system permease protein cysT (288 aa).

8 consecutive transmembrane segments (helical) span residues 2–22, 28–48, 77–97, 112–132, 149–169, 196–218, 227–247, and 257–277; these read IPLFFIPPFIILFITKGKFRF, LVLACALHYGTFILALPIFFL, FLTALLATIINAIFGLILAWV, TVDLPFALPTSVGGLTLMTVF, IVFNPIGVLLAMIFVSLPFVV, TTFWHILFPPLTPSLLTGTTLGF, SIVLIASNIPMKDLVISVLLF, and SATIIASFVLIISFTALFFIN. An ABC transmembrane type-1 domain is found at 73-277; it reads YGFTFLTALL…ISFTALFFIN (205 aa).

This sequence belongs to the binding-protein-dependent transport system permease family. CysTW subfamily.

Its subcellular location is the plastid. The protein localises to the chloroplast membrane. Its function is as follows. Part of the ABC transporter complex cysAWTP (TC 3.A.1.6.1) involved in sulfate/thiosulfate import. Probably responsible for the translocation of the substrate across the membrane. The protein is Probable sulfate transport system permease protein cysT (cysT) of Marchantia polymorpha (Common liverwort).